Here is a 128-residue protein sequence, read N- to C-terminus: Holo-[acyl-carrier-protein] synthase (128 aa).

Residues aspartate 10 and glutamate 59 each contribute to the Mg(2+) site.

The protein belongs to the P-Pant transferase superfamily. AcpS family. The cofactor is Mg(2+).

Its subcellular location is the cytoplasm. The catalysed reaction is apo-[ACP] + CoA = holo-[ACP] + adenosine 3',5'-bisphosphate + H(+). Functionally, transfers the 4'-phosphopantetheine moiety from coenzyme A to a Ser of acyl-carrier-protein. This is Holo-[acyl-carrier-protein] synthase from Syntrophotalea carbinolica (strain DSM 2380 / NBRC 103641 / GraBd1) (Pelobacter carbinolicus).